The primary structure comprises 502 residues: Lysine--tRNA ligase (502 aa).

The Mg(2+) site is built by E413 and E420.

It belongs to the class-II aminoacyl-tRNA synthetase family. As to quaternary structure, homodimer. It depends on Mg(2+) as a cofactor.

Its subcellular location is the cytoplasm. The enzyme catalyses tRNA(Lys) + L-lysine + ATP = L-lysyl-tRNA(Lys) + AMP + diphosphate. The sequence is that of Lysine--tRNA ligase (lysS) from Haemophilus influenzae (strain ATCC 51907 / DSM 11121 / KW20 / Rd).